Reading from the N-terminus, the 264-residue chain is Small ribosomal subunit protein eS1B (264 aa).

Over residues 1-19 (MALGKNKRISKGGKRGKRG) the composition is skewed to basic residues. The interval 1–23 (MALGKNKRISKGGKRGKRGKAQE) is disordered.

This sequence belongs to the eukaryotic ribosomal protein eS1 family. Component of the small ribosomal subunit. Mature ribosomes consist of a small (40S) and a large (60S) subunit. The 40S subunit contains about 33 different proteins and 1 molecule of RNA (18S). The 60S subunit contains about 49 different proteins and 3 molecules of RNA (25S, 5.8S and 5S).

The protein localises to the cytoplasm. This is Small ribosomal subunit protein eS1B from Leishmania infantum.